We begin with the raw amino-acid sequence, 561 residues long: Potassium-transporting ATPase potassium-binding subunit (561 aa).

12 helical membrane passes run 2-22 (GLGLLQIGLTLCIVIAITPVL), 65-85 (YIRAILYTNLFMGILVYSLIH), 135-155 (ALGFLMFTSAATGLAVGIAFI), 177-197 (ILLPISVIGAIALVLLGVPQT), 253-273 (FIETIAMIAIPAAMIYTYGVF), 280-300 (AWLLFWMVFIVFVILVWVAAT), 327-347 (FGWAETALWAVMTTATMCGAV), 353-373 (ALMPQGLFATLFNLFLQIIWG), 378-398 (GTAYLFIYLILTVFLTGLMVG), 413-433 (IVLASLILLVHPIVVLIPSAI), 482-502 (LSTSLSILVGRYVPIIAMLLL), and 531-551 (AGIVLILGVLTFFPVLALGPI).

It belongs to the KdpA family. In terms of assembly, the system is composed of three essential subunits: KdpA, KdpB and KdpC.

Its subcellular location is the cell membrane. Its function is as follows. Part of the high-affinity ATP-driven potassium transport (or Kdp) system, which catalyzes the hydrolysis of ATP coupled with the electrogenic transport of potassium into the cytoplasm. This subunit binds the extracellular potassium ions and delivers the ions to the membrane domain of KdpB through an intramembrane tunnel. In Anabaena sp. (strain L31), this protein is Potassium-transporting ATPase potassium-binding subunit.